Reading from the N-terminus, the 457-residue chain is Probable ubiquitin carboxyl-terminal hydrolase 16 (457 aa).

Residues 34–97 form a disordered region; it reads VSSPSVPEGT…DGANDFVDED (64 aa). Over residues 45–67 the composition is skewed to polar residues; that stretch reads TVLNNPKQSTVSRKSFSAPTSPT. Ser61 is modified (phosphoserine). Thr64 carries the post-translational modification Phosphothreonine. Ser65 carries the post-translational modification Phosphoserine. The USP domain maps to 125-429; the sequence is PGLVNLGNTC…QAYILQYKRK (305 aa). Cys134 serves as the catalytic Nucleophile. His388 (proton acceptor) is an active-site residue. The disordered stretch occupies residues 434–457; sequence SKHKLNTENTVTKTSNKKRRKISF. The segment covering 448–457 has biased composition (basic residues); that stretch reads SNKKRRKISF.

This sequence belongs to the peptidase C19 family.

The enzyme catalyses Thiol-dependent hydrolysis of ester, thioester, amide, peptide and isopeptide bonds formed by the C-terminal Gly of ubiquitin (a 76-residue protein attached to proteins as an intracellular targeting signal).. This is Probable ubiquitin carboxyl-terminal hydrolase 16 (ubp16) from Schizosaccharomyces pombe (strain 972 / ATCC 24843) (Fission yeast).